The sequence spans 419 residues: Serine hydroxymethyltransferase (419 aa).

Residues L121 and 125-127 (GHL) each bind (6S)-5,6,7,8-tetrahydrofolate. K230 carries the N6-(pyridoxal phosphate)lysine modification. (6S)-5,6,7,8-tetrahydrofolate is bound by residues E246 and 355–357 (SPF).

Belongs to the SHMT family. Homodimer. Pyridoxal 5'-phosphate is required as a cofactor.

It is found in the cytoplasm. The catalysed reaction is (6R)-5,10-methylene-5,6,7,8-tetrahydrofolate + glycine + H2O = (6S)-5,6,7,8-tetrahydrofolate + L-serine. It functions in the pathway one-carbon metabolism; tetrahydrofolate interconversion. The protein operates within amino-acid biosynthesis; glycine biosynthesis; glycine from L-serine: step 1/1. Functionally, catalyzes the reversible interconversion of serine and glycine with tetrahydrofolate (THF) serving as the one-carbon carrier. This reaction serves as the major source of one-carbon groups required for the biosynthesis of purines, thymidylate, methionine, and other important biomolecules. Also exhibits THF-independent aldolase activity toward beta-hydroxyamino acids, producing glycine and aldehydes, via a retro-aldol mechanism. The chain is Serine hydroxymethyltransferase from Streptococcus suis (strain 98HAH33).